A 519-amino-acid chain; its full sequence is Circadian clock oscillator protein KaiC 1 (519 aa).

KaiC domains are found at residues Met-1–Phe-248 and Ala-262–Glu-519. Gly-50, Thr-51, Gly-52, Lys-53, Thr-54, Leu-55, Ser-90, Lys-225, Leu-226, Arg-227, Thr-229, His-231, Thr-241, Thr-291, Gly-292, Thr-293, Gly-294, Lys-295, Thr-296, and Leu-297 together coordinate ATP. Thr-54 is a binding site for Mg(2+). Thr-296 lines the Mg(2+) pocket. A Mg(2+)-binding site is contributed by Glu-319. Trp-332 serves as a coordination point for ATP. Ser-432 carries the post-translational modification Phosphoserine; by autocatalysis. A Phosphothreonine; by autocatalysis modification is found at Thr-433. Residues Arg-452, Lys-458, Met-459, Arg-460, Ser-462, His-464, and Lys-466 each coordinate ATP.

It belongs to the KaiC family. As to quaternary structure, homohexamer; hexamerization is dependent on ATP-binding. Core component of the KaiABC complex, at least composed of a KaiC homohexamer, a KaiB dimer and two KaiA dimers. Interacts directly with SasA. Multimerizes, probably forming homohexamers, no interaction with KaiC2 or KaiC3 is seen. Interacts with KaiA. In another study interacts with itself, KaiB1, KaiB3 and KaiC3. Interacts with SasA (hik8). The cofactor is Mg(2+). Post-translationally, phosphorylated on serine and threonine residues by autocatalysis. Has a 4 step phosphorylation cycle; the autokinase acts first on Thr-433, then Ser-432. When Ser-432 is modified KaiC switches to an autophosphatase mode, acting first on phospho-Thr-433 then phospho-Ser-432.

The catalysed reaction is L-seryl-[protein] + ATP = O-phospho-L-seryl-[protein] + ADP + H(+). It carries out the reaction L-threonyl-[protein] + ATP = O-phospho-L-threonyl-[protein] + ADP + H(+). The enzyme catalyses ATP + H2O = ADP + phosphate + H(+). With respect to regulation, the interaction with KaiA enhances its phosphorylation status, while the interaction with KaiB decreases it. In terms of biological role, component of the oscillator and circadian clock in this organism, enhances fitness in a rhythmic environment. Autophosphorylates in the presence of KaiA, no activity is seen in its absence. Its function is as follows. Central component of the KaiABC oscillator complex, which constitutes the main circadian regulator in cyanobacteria. Complex composition changes during the circadian cycle to control KaiC phosphorylation. KaiA stimulates KaiC autophosphorylation, while KaiB sequesters KaiA, leading to KaiC autodephosphorylation. Clock output pathways impact the RpaA transcriptional regulator. KaiC enhances the autophosphorylation activity of SasA, which then transfers its phosphate group to RpaA to activate it. KaiB and KaiC together enhance the phospho-RpaA dephosphatase activity of CikA. Functionally, has a weak, temperature-independent ATPase activity; ATPase activity defines the circadian period. The phosphorylation state of KaiC modulates its ATPase activity and effects KaiB binding. The sequence is that of Circadian clock oscillator protein KaiC 1 from Synechocystis sp. (strain ATCC 27184 / PCC 6803 / Kazusa).